A 124-amino-acid polypeptide reads, in one-letter code: Small ribosomal subunit protein uS12 (124 aa).

Aspartate 89 carries the post-translational modification 3-methylthioaspartic acid. The disordered stretch occupies residues 103–124 (DTAGVKDRRQSRSKYGAKSPKE).

The protein belongs to the universal ribosomal protein uS12 family. In terms of assembly, part of the 30S ribosomal subunit. Contacts proteins S8 and S17. May interact with IF1 in the 30S initiation complex.

Functionally, with S4 and S5 plays an important role in translational accuracy. Interacts with and stabilizes bases of the 16S rRNA that are involved in tRNA selection in the A site and with the mRNA backbone. Located at the interface of the 30S and 50S subunits, it traverses the body of the 30S subunit contacting proteins on the other side and probably holding the rRNA structure together. The combined cluster of proteins S8, S12 and S17 appears to hold together the shoulder and platform of the 30S subunit. This chain is Small ribosomal subunit protein uS12, found in Prochlorococcus marinus (strain NATL2A).